The sequence spans 213 residues: Andrastin A biosynthesis cluster protein B (213 aa).

In terms of biological role, part of the gene cluster that mediates the biosynthesis of andrastins, meroterpenoid compounds that exhibit inhibitory activity against ras farnesyltransferase, suggesting that they could be promising leads for antitumor agents. The first step of the pathway is the synthesis of 3,5-dimethylorsellinic acid (DMOA) by the polyketide synthase adrD via condensation of one acetyl-CoA starter unit with 3 malonyl-CoA units and 2 methylations. DMAO is then converted to farnesyl-DMAO by the prenyltransferase adrG. The methyltransferase adrK catalyzes the methylation of the carboxyl group of farnesyl-DMAO to farnesyl-DMAO methyl ester which is further converted to epoxyfarnesyl-DMAO methyl ester by the FAD-dependent monooxygenase adrH. The terpene cyclase adrI then catalyzes the carbon skeletal rearrangement to generate the andrastin E, the first compound in the pathway having the andrastin scaffold, with the tetracyclic ring system. The post-cyclization tailoring enzymes adrF, adrE, adrJ, and adrA, are involved in the conversion of andrastin E into andrastin A. The short chain dehydrogenase adrF is responsible for the oxidation of the C-3 a hydroxyl group of andrastin E to yield the corresponding ketone, andrastin D. The ketoreductase adrE stereoselectively reduces the carbonyl moiety to reverse the stereochemistry of the C-3 position to yield andrastin F. The acetyltransferase adrJ is the acetyltransferase that attaches the acetyl group to the C-3 hydroxyl group of andrastin F to yield andrastin C. Finally, the cytochrome P450 monooxygenase adrA catalyzes two sequential oxidation reactions of the C-23 methyl group, to generate the corresponding alcohol andrastin B, and aldehyde andrastin A. This chain is Andrastin A biosynthesis cluster protein B, found in Penicillium rubens (strain ATCC 28089 / DSM 1075 / NRRL 1951 / Wisconsin 54-1255) (Penicillium chrysogenum).